The chain runs to 272 residues: Imidazole glycerol phosphate synthase subunit HisF (272 aa).

Residues aspartate 11 and aspartate 130 contribute to the active site.

This sequence belongs to the HisA/HisF family. Heterodimer of HisH and HisF.

It localises to the cytoplasm. It carries out the reaction 5-[(5-phospho-1-deoxy-D-ribulos-1-ylimino)methylamino]-1-(5-phospho-beta-D-ribosyl)imidazole-4-carboxamide + L-glutamine = D-erythro-1-(imidazol-4-yl)glycerol 3-phosphate + 5-amino-1-(5-phospho-beta-D-ribosyl)imidazole-4-carboxamide + L-glutamate + H(+). It participates in amino-acid biosynthesis; L-histidine biosynthesis; L-histidine from 5-phospho-alpha-D-ribose 1-diphosphate: step 5/9. Functionally, IGPS catalyzes the conversion of PRFAR and glutamine to IGP, AICAR and glutamate. The HisF subunit catalyzes the cyclization activity that produces IGP and AICAR from PRFAR using the ammonia provided by the HisH subunit. The sequence is that of Imidazole glycerol phosphate synthase subunit HisF from Methanococcus maripaludis (strain C7 / ATCC BAA-1331).